The sequence spans 349 residues: Isopentenyl-diphosphate delta-isomerase (349 aa).

9 to 10 contributes to the substrate binding site; that stretch reads RK. FMN is bound by residues 65–67, Ser95, and Asn124; that span reads AMT. Position 95-97 (95-97) interacts with substrate; sequence STH. Gln154 serves as a coordination point for substrate. Glu155 contributes to the Mg(2+) binding site. Residues Lys186, Ser211, Thr216, 262-264, and 283-284 contribute to the FMN site; these read GLR and SR.

Belongs to the IPP isomerase type 2 family. As to quaternary structure, homooctamer. Dimer of tetramers. FMN is required as a cofactor. The cofactor is NADPH. Mg(2+) serves as cofactor.

It is found in the cytoplasm. The catalysed reaction is isopentenyl diphosphate = dimethylallyl diphosphate. Involved in the biosynthesis of isoprenoids. Catalyzes the 1,3-allylic rearrangement of the homoallylic substrate isopentenyl (IPP) to its allylic isomer, dimethylallyl diphosphate (DMAPP). The protein is Isopentenyl-diphosphate delta-isomerase of Staphylococcus aureus (strain N315).